We begin with the raw amino-acid sequence, 209 residues long: Kynurenine formamidase (209 aa).

Position 19 (W19) interacts with substrate. Residues H49, H53, and D55 each coordinate Zn(2+). H59 acts as the Proton donor/acceptor in catalysis. 2 residues coordinate Zn(2+): H160 and E172.

It belongs to the Cyclase 1 superfamily. KynB family. As to quaternary structure, homodimer. Requires Zn(2+) as cofactor.

The catalysed reaction is N-formyl-L-kynurenine + H2O = L-kynurenine + formate + H(+). It participates in amino-acid degradation; L-tryptophan degradation via kynurenine pathway; L-kynurenine from L-tryptophan: step 2/2. Functionally, catalyzes the hydrolysis of N-formyl-L-kynurenine to L-kynurenine, the second step in the kynurenine pathway of tryptophan degradation. In Ralstonia pickettii (strain 12J), this protein is Kynurenine formamidase.